Reading from the N-terminus, the 76-residue chain is Vasotab (76 aa).

The N-terminal stretch at 1–20 (MKFALFSVLVVLLIATFVAA) is a signal peptide. The region spanning 21 to 76 (DECPRICTADYRPVCGTPSGGRRSANRTFGNQCSLNAHNCLNKGDTYDKLHDGECK) is the Kazal-like domain. 3 disulfide bridges follow: cysteine 23/cysteine 60, cysteine 27/cysteine 53, and cysteine 35/cysteine 75.

As to expression, expressed by the salivary gland.

It is found in the secreted. Functionally, vasodilator protein that inhibits vasoconstriction of isolated rat femoral artery induced by phenylephrine. Since platelet aggregation and vasoconstriction are key hemostatic responses, particularly in small wounds, this protein likely participates in the antihemostatic responses during blood feeding. Blocks L-type calcium channels (Cav1/CACNA1) in left ventricular myocytes isolated from rat hearts. The protein is Vasotab of Hybomitra bimaculata (Horse fly).